We begin with the raw amino-acid sequence, 389 residues long: Alkanesulfonate monooxygenase (389 aa).

It belongs to the SsuD family.

It carries out the reaction an alkanesulfonate + FMNH2 + O2 = an aldehyde + FMN + sulfite + H2O + 2 H(+). Its function is as follows. Catalyzes the desulfonation of aliphatic sulfonates. The protein is Alkanesulfonate monooxygenase of Rhizobium etli (strain CIAT 652).